The sequence spans 103 residues: ESAT-6-like protein EsxF (103 aa).

The protein belongs to the WXG100 family. CFP-10 subfamily.

The protein resides in the secreted. This is ESAT-6-like protein EsxF from Mycobacterium tuberculosis (strain CDC 1551 / Oshkosh).